A 1003-amino-acid chain; its full sequence is Retinoblastoma-related protein 1 (1003 aa).

The domain A stretch occupies residues 405–607; the sequence is TPVSTAMTTA…EKGSSMYNSL (203 aa). A pocket region spans residues 405–860; that stretch reads TPVSTAMTTA…NEMFIPSVKP (456 aa). Residues 608–729 are spacer; it reads AVAKPSLAAE…PGGGGETCAE (122 aa). The domain B stretch occupies residues 730–860; it reads TAINVFFGKI…NEMFIPSVKP (131 aa). Residues 868–899 are disordered; sequence AGNNSEKNDHNDGQGPASPKPSPFPKLPDMSP.

It belongs to the retinoblastoma protein (RB) family. As to expression, expressed in roots, stems, leaves and flowers.

The protein resides in the nucleus. Its function is as follows. Regulator of biological processes that recruits a histone deacetylase to control gene transcription. Formation of stable complexes with geminiviridae replication-associated proteins may create a cellular environment which favors viral DNA replication. May play a role in the entry into mitosis, negatively regulating the cell proliferation during leaf, stem, and flower development. Critical regulator of the endocycle. This Nicotiana benthamiana protein is Retinoblastoma-related protein 1 (RBR1).